The primary structure comprises 79 residues: Morintide mO1 (79 aa).

An N-terminal signal peptide occupies residues 1 to 20; it reads MAKLSFLSLFLLCLVATATA. The region spanning 21–63 is the Chitin-binding type-1 domain; that stretch reads QNCGRQAGNRACANQLCCSQYGFCGSTSEYCSRANGCQSNCRG. Cystine bridges form between Cys-23-Cys-38, Cys-32-Cys-44, Cys-37-Cys-51, and Cys-57-Cys-61. A propeptide spanning residues 64–79 is cleaved from the precursor; sequence GGGADGAGGEAGGGGP.

In terms of tissue distribution, leaves (at protein level).

In terms of biological role, chitin-binding protein which functions in defense against chitin-containing fungal pathogens. Inhibits the growth of budding hyphae in A.alternata and A.brassiciola. In Moringa oleifera (Horseradish tree), this protein is Morintide mO1.